The chain runs to 235 residues: Voltage-gated hydrogen channel 1 (235 aa).

The Cytoplasmic portion of the chain corresponds to 1 to 65 (MSRYLKHFTA…SLRKLYSTER (65 aa)). A helical membrane pass occupies residues 66 to 86 (FQIVVVCLVVLDAIFVLCELL). Topologically, residues 87–103 (IDLSIIEADHHRIAPQV) are extracellular. The chain crosses the membrane as a helical span at residues 104-126 (FHYLSLALLTFFMVELAGKIFAY). The Cytoplasmic segment spans residues 127–134 (RLEFLHHK). Residues 135-155 (FEVFDGIVVVVSFILDIIYIS) form a helical membrane-spanning segment. Over 156–162 (KEDAFDA) the chain is Extracellular. A helical membrane pass occupies residues 163-183 (MGLLILLRLWRVARIINGILV). The Cytoplasmic segment spans residues 184-235 (SVQNRANHRVEKLKEINESLVHQVNELKEQNTKMDQENVRLRALLKDHSIDF). A coiled-coil region spans residues 187–231 (NRANHRVEKLKEINESLVHQVNELKEQNTKMDQENVRLRALLKDH).

The protein belongs to the hydrogen channel family. As to quaternary structure, homodimer.

It is found in the membrane. Its subcellular location is the cell membrane. In terms of biological role, mediates the voltage-dependent proton permeability of excitable membranes. Forms a proton-selective channel through which protons may pass in accordance with their electrochemical gradient. In Danio rerio (Zebrafish), this protein is Voltage-gated hydrogen channel 1 (hvcn1).